The primary structure comprises 157 residues: Cyclic pyranopterin monophosphate synthase (157 aa).

Residues 74-76 (MCH) and 112-113 (ME) each bind substrate. Aspartate 127 is an active-site residue.

It belongs to the MoaC family. As to quaternary structure, homohexamer; trimer of dimers.

It catalyses the reaction (8S)-3',8-cyclo-7,8-dihydroguanosine 5'-triphosphate = cyclic pyranopterin phosphate + diphosphate. Its pathway is cofactor biosynthesis; molybdopterin biosynthesis. In terms of biological role, catalyzes the conversion of (8S)-3',8-cyclo-7,8-dihydroguanosine 5'-triphosphate to cyclic pyranopterin monophosphate (cPMP). This chain is Cyclic pyranopterin monophosphate synthase, found in Campylobacter lari (strain RM2100 / D67 / ATCC BAA-1060).